Consider the following 301-residue polypeptide: Nucleotide-binding protein Mb1456 (301 aa).

Gly24–Gly31 is an ATP binding site. Asp75–Ser78 provides a ligand contact to GTP.

This sequence belongs to the RapZ-like family.

Functionally, displays ATPase and GTPase activities. The chain is Nucleotide-binding protein Mb1456 from Mycobacterium bovis (strain ATCC BAA-935 / AF2122/97).